Consider the following 246-residue polypeptide: tRNA (guanine-N(7)-)-methyltransferase (246 aa).

The disordered stretch occupies residues 1–23; that stretch reads MIESSSPTPPALHEGAPADVSHP. 4 residues coordinate S-adenosyl-L-methionine: Glu75, Glu100, Asp127, and Asp150. Asp150 is an active-site residue. A substrate-binding site is contributed by Lys154. The interaction with RNA stretch occupies residues 156–161; the sequence is KHNKRR. Substrate contacts are provided by residues Asp186 and 225 to 228; that span reads TKFE.

This sequence belongs to the class I-like SAM-binding methyltransferase superfamily. TrmB family.

It carries out the reaction guanosine(46) in tRNA + S-adenosyl-L-methionine = N(7)-methylguanosine(46) in tRNA + S-adenosyl-L-homocysteine. Its pathway is tRNA modification; N(7)-methylguanine-tRNA biosynthesis. Its function is as follows. Catalyzes the formation of N(7)-methylguanine at position 46 (m7G46) in tRNA. The protein is tRNA (guanine-N(7)-)-methyltransferase of Polaromonas naphthalenivorans (strain CJ2).